A 450-amino-acid chain; its full sequence is Glucose-6-phosphate isomerase (450 aa).

A Phosphothreonine modification is found at threonine 39. Glutamate 291 acts as the Proton donor in catalysis. Residues histidine 312 and lysine 426 contribute to the active site.

It belongs to the GPI family.

Its subcellular location is the cytoplasm. It carries out the reaction alpha-D-glucose 6-phosphate = beta-D-fructose 6-phosphate. It functions in the pathway carbohydrate biosynthesis; gluconeogenesis. The protein operates within carbohydrate degradation; glycolysis; D-glyceraldehyde 3-phosphate and glycerone phosphate from D-glucose: step 2/4. Its function is as follows. Catalyzes the reversible isomerization of glucose-6-phosphate to fructose-6-phosphate. The protein is Glucose-6-phosphate isomerase of Bacillus anthracis.